The chain runs to 335 residues: MTRPGVGVAITGSGSAVPSTTLSNDQLSQLVETSDEWIRSRTGIGQRRVAQPQIESLSSLAAAAGQSALEAAGLEATSVDLILLATSTPDDLFGSACQVQAALGATQAVAFDLTAACSGFLFALVTGAQFIRSGAYRTVLVIGADVLSRWTDWSDRRTCVLFGDGAGAVVLQASEIDQLLGFEMRSDGSLNGCLTLAYQADNQSLLSDIEIAQGTYQPVAMNGQEVYRFAVKRVPEILEKTLFHAGIDRQEVDWLLLHQANQRILDAVADRLDISRDRVLSNLVNYGNTSSATIPLVLDEAVKAGKIQSGDLIAASGFGAGLSWGAALFRWGTVV.

Catalysis depends on residues Cys117 and His258. Residues 259 to 263 (QANQR) are ACP-binding. The active site involves Asn288.

The protein belongs to the thiolase-like superfamily. FabH family. Homodimer.

Its subcellular location is the cytoplasm. It carries out the reaction malonyl-[ACP] + acetyl-CoA + H(+) = 3-oxobutanoyl-[ACP] + CO2 + CoA. It participates in lipid metabolism; fatty acid biosynthesis. Catalyzes the condensation reaction of fatty acid synthesis by the addition to an acyl acceptor of two carbons from malonyl-ACP. Catalyzes the first condensation reaction which initiates fatty acid synthesis and may therefore play a role in governing the total rate of fatty acid production. Possesses both acetoacetyl-ACP synthase and acetyl transacylase activities. Its substrate specificity determines the biosynthesis of branched-chain and/or straight-chain of fatty acids. The sequence is that of Beta-ketoacyl-[acyl-carrier-protein] synthase III from Synechococcus elongatus (strain ATCC 33912 / PCC 7942 / FACHB-805) (Anacystis nidulans R2).